The following is a 528-amino-acid chain: Cytochrome P450 monooxygenase polB (528 aa).

Residues 3-23 (SFFLVCPVAFLGFTICYLVYV) traverse the membrane as a helical segment. Residue Cys-473 coordinates heme.

It belongs to the cytochrome P450 family. The cofactor is heme.

It is found in the membrane. It carries out the reaction 4beta-carboxyl motiol + reduced [NADPH--hemoprotein reductase] + O2 = 2alpha-hydroxyl, 4beta-carboxyl motiol + oxidized [NADPH--hemoprotein reductase] + H2O + H(+). The enzyme catalyses 2-deoxypolytolypin + reduced [NADPH--hemoprotein reductase] + O2 = polytolypin + oxidized [NADPH--hemoprotein reductase] + H2O + H(+). It participates in secondary metabolite biosynthesis; terpenoid biosynthesis. In terms of biological role, cytochrome P450 monooxygenase; part of the gene cluster that mediates the biosynthesis of antifungal fernane-type triterpenoid polytolypin. PolB acts as a hydroxylase and installs the 2-alpha-hydroxyl group in polytolypin. Within the pathway, the triterpene cyclase polA first catalyzes the cyclization of 2,3-oxidosqualene to motiol, polC converts the 4-alpha-methyl group of motiol to a carboxyl group, polB is responsible for appending a hydroxyl group at the 2-alpha position and polE is a dual functional P450, which can catalyze the formation of both the 1-beta-hydroxyl group and 10-beta-carboxyl group. In Polytolypa hystricis (strain UAMH7299), this protein is Cytochrome P450 monooxygenase polB.